A 781-amino-acid chain; its full sequence is Probable serine/threonine-protein kinase C70.05c (781 aa).

Disordered stretches follow at residues 1-315 and 368-417; these read MPSD…PLVS and YSGK…TNIS. The span at 21 to 31 shows a compositional bias: low complexity; that stretch reads ESPSSRSIGSG. Residues 43–63 show a composition bias toward polar residues; sequence FKNSFLSRKNSSQIKSPSDYK. A compositionally biased stretch (basic and acidic residues) spans 64 to 73; the sequence is SSAHEQRVNH. The span at 74–92 shows a compositional bias: polar residues; it reads TTDSMAHVPGNNSPLQTPQ. Ser-94 is modified (phosphoserine). Residues 112 to 121 are compositionally biased toward basic residues; sequence SRHHKPHHSG. Polar residues-rich tracts occupy residues 136 to 146, 161 to 195, and 206 to 228; these read SNANSPTSESP, KNTS…PNSR, and NSAS…SLSR. The residue at position 253 (Ser-253) is a Phosphoserine. The span at 272–304 shows a compositional bias: low complexity; it reads PLTASPTPSSPTGTPNSMSKSPSLSSLASTGAS. Residues 379–406 show a composition bias toward polar residues; sequence NVGSSANTAPNSPTSANSSEGNQGNGPT. The Protein kinase domain maps to 432-742; it reads AKRVVPRLSA…AQEALNLPFV (311 aa). Residues 452 to 460 and Lys-480 contribute to the ATP site; that span reads MGSGATAVI. Catalysis depends on Asp-584, which acts as the Proton acceptor.

It belongs to the protein kinase superfamily. Ser/Thr protein kinase family.

The protein resides in the cytoplasm. It carries out the reaction L-seryl-[protein] + ATP = O-phospho-L-seryl-[protein] + ADP + H(+). The enzyme catalyses L-threonyl-[protein] + ATP = O-phospho-L-threonyl-[protein] + ADP + H(+). The protein is Probable serine/threonine-protein kinase C70.05c of Schizosaccharomyces pombe (strain 972 / ATCC 24843) (Fission yeast).